The following is a 118-amino-acid chain: UPF0102 protein Nwi_0116 (118 aa).

This sequence belongs to the UPF0102 family.

The polypeptide is UPF0102 protein Nwi_0116 (Nitrobacter winogradskyi (strain ATCC 25391 / DSM 10237 / CIP 104748 / NCIMB 11846 / Nb-255)).